The chain runs to 94 residues: Large ribosomal subunit protein bL27 (94 aa).

The propeptide occupies 1-9 (MLKLNLQFF). The disordered stretch occupies residues 12–32 (KKGVSSTKNGRDSESKRLGAK). A compositionally biased stretch (basic and acidic residues) spans 20–32 (NGRDSESKRLGAK).

It belongs to the bacterial ribosomal protein bL27 family. Post-translationally, the N-terminus is cleaved by ribosomal processing cysteine protease Prp.

In Staphylococcus carnosus (strain TM300), this protein is Large ribosomal subunit protein bL27.